Here is a 201-residue protein sequence, read N- to C-terminus: L-rhamnose-binding lectin SML (201 aa).

Cystine bridges form between Cys10-Cys40, Cys20-Cys99, Cys54-Cys86, Cys67-Cys73, Cys108-Cys138, Cys117-Cys195, Cys152-Cys182, and Cys163-Cys169. SUEL-type lectin domains lie at 18-100 (LSCD…YNCF) and 107-196 (TCEH…YVCQ). Asn168 carries an N-linked (GlcNAc...) asparagine glycan.

In terms of assembly, homodimer; non-covalently linked.

Rhamnose-binding lectin. Also binds melibiose, raffinose, D-galactose, L-arabinose, D-fucose, maltose and D-glucose with decreasing affinity. Does not bind D-arabinose, L-fucose, lactose, xylose or 2-deoxy-D-galactose. Shows strong hemagglutinating activity against rabbit erythrocytes. The protein is L-rhamnose-binding lectin SML of Scomberomorus niphonius (Japanese Spanish mackerel).